A 514-amino-acid polypeptide reads, in one-letter code: 2,3-bisphosphoglycerate-independent phosphoglycerate mutase (514 aa).

Positions 13 and 63 each coordinate Mn(2+). Ser63 functions as the Phosphoserine intermediate in the catalytic mechanism. Substrate-binding positions include His124, 154 to 155, Arg186, Arg192, 258 to 261, and Lys332; these read RD and RADR. Mn(2+) contacts are provided by Asp399, His403, Asp440, His441, and His459.

This sequence belongs to the BPG-independent phosphoglycerate mutase family. Monomer. Mn(2+) serves as cofactor.

The catalysed reaction is (2R)-2-phosphoglycerate = (2R)-3-phosphoglycerate. The protein operates within carbohydrate degradation; glycolysis; pyruvate from D-glyceraldehyde 3-phosphate: step 3/5. Its function is as follows. Catalyzes the interconversion of 2-phosphoglycerate and 3-phosphoglycerate. This chain is 2,3-bisphosphoglycerate-independent phosphoglycerate mutase, found in Legionella pneumophila (strain Corby).